The following is a 703-amino-acid chain: Polyribonucleotide nucleotidyltransferase (703 aa).

Mg(2+)-binding residues include D488 and D494. Residues 555–614 (PKIVKMQINPDKIKDVIGPGGKIITKIIDETGVKIDIEQTGEVFISGIEIDMIKKAQELI) form the KH domain. One can recognise an S1 motif domain in the interval 624 to 692 (GKTYKGKVSR…EKGRVNLSRK (69 aa)).

This sequence belongs to the polyribonucleotide nucleotidyltransferase family. The cofactor is Mg(2+).

It localises to the cytoplasm. The catalysed reaction is RNA(n+1) + phosphate = RNA(n) + a ribonucleoside 5'-diphosphate. Functionally, involved in mRNA degradation. Catalyzes the phosphorolysis of single-stranded polyribonucleotides processively in the 3'- to 5'-direction. The protein is Polyribonucleotide nucleotidyltransferase of Clostridioides difficile (strain 630) (Peptoclostridium difficile).